The following is a 115-amino-acid chain: Large ribosomal subunit protein uL22 (115 aa).

The protein belongs to the universal ribosomal protein uL22 family. As to quaternary structure, part of the 50S ribosomal subunit.

Its function is as follows. This protein binds specifically to 23S rRNA; its binding is stimulated by other ribosomal proteins, e.g. L4, L17, and L20. It is important during the early stages of 50S assembly. It makes multiple contacts with different domains of the 23S rRNA in the assembled 50S subunit and ribosome. In terms of biological role, the globular domain of the protein is located near the polypeptide exit tunnel on the outside of the subunit, while an extended beta-hairpin is found that lines the wall of the exit tunnel in the center of the 70S ribosome. The sequence is that of Large ribosomal subunit protein uL22 from Lactococcus lactis subsp. lactis (strain IL1403) (Streptococcus lactis).